The primary structure comprises 185 residues: Lipid A acyltransferase PagP (185 aa).

The first 14 residues, 1 to 14, serve as a signal peptide directing secretion; sequence MKLKPVLYLLMLLG. A lipid anchor (N-palmitoyl cysteine) is attached at Cys15. Residue Cys15 is the site of S-diacylglycerol cysteine attachment. Catalysis depends on residues His57, Asp100, and Ser101.

It belongs to the lipid A palmitoyltransferase family. As to quaternary structure, homodimer.

It is found in the cell outer membrane. It catalyses the reaction a lipid A + a 1,2-diacyl-sn-glycero-3-phosphocholine = a hepta-acyl lipid A + a 2-acyl-sn-glycero-3-phosphocholine. The catalysed reaction is a lipid IVA + a 1,2-diacyl-sn-glycero-3-phosphocholine = a lipid IVB + a 2-acyl-sn-glycero-3-phosphocholine. It carries out the reaction a lipid IIA + a 1,2-diacyl-sn-glycero-3-phosphocholine = a lipid IIB + a 2-acyl-sn-glycero-3-phosphocholine. In terms of biological role, transfers a fatty acid residue from the sn-1 position of a phospholipid to the N-linked hydroxyfatty acid chain on the proximal unit of lipid A or its precursors. The chain is Lipid A acyltransferase PagP from Erwinia sp. (strain Ejp617).